The sequence spans 138 residues: Large ribosomal subunit protein uL16 (138 aa).

Residues 1–16 (MLIPRRVKHRKQHHPG) show a composition bias toward basic residues. The tract at residues 1-24 (MLIPRRVKHRKQHHPGRSGAATGG) is disordered.

The protein belongs to the universal ribosomal protein uL16 family. Part of the 50S ribosomal subunit.

In terms of biological role, binds 23S rRNA and is also seen to make contacts with the A and possibly P site tRNAs. The sequence is that of Large ribosomal subunit protein uL16 from Arthrobacter sp. (strain FB24).